The sequence spans 458 residues: UDP-N-acetylmuramate--L-alanine ligase (458 aa).

118–124 (GTHGKTT) contributes to the ATP binding site.

The protein belongs to the MurCDEF family.

It is found in the cytoplasm. It carries out the reaction UDP-N-acetyl-alpha-D-muramate + L-alanine + ATP = UDP-N-acetyl-alpha-D-muramoyl-L-alanine + ADP + phosphate + H(+). It participates in cell wall biogenesis; peptidoglycan biosynthesis. In terms of biological role, cell wall formation. This Clostridium novyi (strain NT) protein is UDP-N-acetylmuramate--L-alanine ligase.